A 249-amino-acid chain; its full sequence is DNA polymerase sliding clamp (249 aa).

It belongs to the PCNA family. In terms of assembly, homotrimer. The subunits circularize to form a toroid; DNA passes through its center. Replication factor C (RFC) is required to load the toroid on the DNA.

Sliding clamp subunit that acts as a moving platform for DNA processing. Responsible for tethering the catalytic subunit of DNA polymerase and other proteins to DNA during high-speed replication. This chain is DNA polymerase sliding clamp, found in Thermococcus fumicolans.